We begin with the raw amino-acid sequence, 506 residues long: Zinc finger protein 157 (506 aa).

Positions 27–98 (VSFEDVAVDF…EEESSGHGYS (72 aa)) constitute a KRAB domain. 12 C2H2-type zinc fingers span residues 162–184 (FECHECGKAYCRKSNLVEHLRIH), 190–212 (YECGECAKTFSARSYLIAHQKTH), 218–240 (FECNECGKSFGRKSQLILHTRTH), 246–268 (YECTECGKTFSEKATLTIHQRTH), 274–296 (YECSECGKTFRVKISLTQHHRTH), 302–324 (YECGECGKNFRAKKSLNQHQRIH), 330–352 (YECGECGKFFRMKMTLNNHQRTH), 358–380 (YQCNECGKSFRVHSSLGIHQRIH), 386–408 (YECNECGNAFYVKARLIEHQRMH), 414–436 (YECSECGKIFSMKKSLCQHRRTH), 442–464 (YECSECGNAFYVKVRLIEHQRIH), and 470–492 (FECQECGKAFCRKAHLTEHQRTH).

Belongs to the krueppel C2H2-type zinc-finger protein family.

Its subcellular location is the nucleus. In terms of biological role, may be involved in transcriptional regulation. In Homo sapiens (Human), this protein is Zinc finger protein 157 (ZNF157).